Here is a 117-residue protein sequence, read N- to C-terminus: Large ribosomal subunit protein bL20 (117 aa).

It belongs to the bacterial ribosomal protein bL20 family.

Functionally, binds directly to 23S ribosomal RNA and is necessary for the in vitro assembly process of the 50S ribosomal subunit. It is not involved in the protein synthesizing functions of that subunit. The chain is Large ribosomal subunit protein bL20 from Vibrio atlanticus (strain LGP32) (Vibrio splendidus (strain Mel32)).